Consider the following 150-residue polypeptide: Copper transporter 3 (150 aa).

2 consecutive transmembrane segments (helical) span residues 50–70 (GGMY…LEFL) and 100–120 (LAYL…LAAV).

This sequence belongs to the copper transporter (Ctr) (TC 1.A.56) family. SLC31A subfamily.

It localises to the membrane. Functionally, involved in the transport of copper. This is Copper transporter 3 (COPT3) from Oryza sativa subsp. japonica (Rice).